A 393-amino-acid polypeptide reads, in one-letter code: Acetylornithine aminotransferase (393 aa).

Pyridoxal 5'-phosphate-binding positions include 96–97 and Phe129; that span reads GT. Arg132 lines the N(2)-acetyl-L-ornithine pocket. 214–217 is a pyridoxal 5'-phosphate binding site; the sequence is DEVQ. At Lys243 the chain carries N6-(pyridoxal phosphate)lysine. Position 271 (Ser271) interacts with N(2)-acetyl-L-ornithine. Thr272 lines the pyridoxal 5'-phosphate pocket.

Belongs to the class-III pyridoxal-phosphate-dependent aminotransferase family. ArgD subfamily. In terms of assembly, homodimer. Requires pyridoxal 5'-phosphate as cofactor.

It localises to the cytoplasm. The catalysed reaction is N(2)-acetyl-L-ornithine + 2-oxoglutarate = N-acetyl-L-glutamate 5-semialdehyde + L-glutamate. It participates in amino-acid biosynthesis; L-arginine biosynthesis; N(2)-acetyl-L-ornithine from L-glutamate: step 4/4. The sequence is that of Acetylornithine aminotransferase from Rhodobacter capsulatus (strain ATCC BAA-309 / NBRC 16581 / SB1003).